The primary structure comprises 296 residues: MESVSSRGGDPVVKPSMEVWHFQIAVYFAFGFFFLRLVLDRYVFQRIALWLLSTGSAPIKLNDAATRAKIVKCKESLWKLLYYAACDFFVLQVIYHEPWARDIKLYFHGWPNQELKLSIKLYYMCQCGFYVYGVAALLAWETRRKDFAVMMSHHVITIILLSYSYLTSFFRIGAIILALHDASDVFMETAKIFKYSEKEFGASVCFALFAVSWLLLRLIYFPFWIIRATSIELLDYLDMTSAEGTLMYYSFNTMLLMLLVFHIYWWYLICAMIVRLLKNRGKVGEDIRSDSEDDDD.

6 consecutive transmembrane segments (helical) span residues 19-39, 80-100, 121-141, 158-178, 206-226, and 254-274; these read VWHFQIAVYFAFGFFFLRLVL, LLYYAACDFFVLQVIYHEPWA, LYYMCQCGFYVYGVAALLAWE, IILLSYSYLTSFFRIGAIILA, FALFAVSWLLLRLIYFPFWII, and MLLMLLVFHIYWWYLICAMIV. Positions 71-278 constitute a TLC domain; the sequence is VKCKESLWKL…ICAMIVRLLK (208 aa). A phosphoserine mark is found at Ser-289 and Ser-291.

Expressed ubiquitously with highest levels in pollen.

The protein localises to the endoplasmic reticulum membrane. The enzyme catalyses a sphingoid base + hexadecanoyl-CoA = an N-hexadecanoyl-sphingoid base + CoA + H(+). It catalyses the reaction sphinganine + hexadecanoyl-CoA = N-hexadecanoylsphinganine + CoA + H(+). The catalysed reaction is sphing-4-enine + hexadecanoyl-CoA = N-hexadecanoylsphing-4-enine + CoA + H(+). It carries out the reaction sphinga-(4E,8E)-dienine + hexadecanoyl-CoA = N-hexadecanoylsphinga-(4E,8E)-dienine + CoA + H(+). The enzyme catalyses sphinga-(4E,8Z)-dienine + hexadecanoyl-CoA = N-hexadecanoylsphinga-(4E,8Z)-dienine + CoA + H(+). It participates in sphingolipid metabolism. Inhibited by the mycotoxin fumonisin B(1), a sphingosine analog mycotoxins produced by pathogenic fungi. Activated by divalent cation such as magnesium Mg(2+), zinc Zn(2+), manganese Mn(2+) and calcium Ca(2+). In terms of biological role, prevents cell division in root meristems and promotes salicylic acid (SA) production and hypersensitive response (HR). Catalyzes the biosynthesis of ceramide sphingolipids with C(16) fatty acids, structural membrane lipids involved in membrane trafficking (e.g. early endosomes) and cell polarity (e.g. polar auxin transport related proteins); accepts only C16:0 fatty acids, but with a wide range of d18 sphingoid bases, such as sphinganine (d18:0) and palmitoyl-CoA. Mediates resistance to sphinganine-analog mycotoxins (SAMs, e.g. fumonisin B(1)) by restoring the sphingolipid biosynthesis. Could salvage the transport of GPI-anchored proteins from the endoplasmic reticulum to the Golgi apparatus in ceramides-depleted cells after SAM exposure. Contributes to hypoxic conditions tolerance (e.g. submergences), especially in the dark, by promoting the formation of very-long-chain (VLC) ceramide species (22:1, 24:1 and 26:1) and of VLC unsaturated ceramides, which are modulating CTR1-mediated ethylene signaling leading to endoplasmic reticulum (ER)-to-nucleus translocation of EIN2 and EIN3. This Arabidopsis thaliana (Mouse-ear cress) protein is Ceramide synthase LOH2.